A 164-amino-acid chain; its full sequence is I-Kappa-B like protein F1 (164 aa).

ANK repeat units lie at residues 57–89 (HGRQCIHTVAWHDRANAVMKIEILMQSGVNINA), 94–124 (TGNTLLHIAASTGNYLLADWFCQQLGVDLGA), and 128–157 (QQETAYYIAYKMRDRKMMKLLRAHGVAYNN).

The protein belongs to the polydnaviridae I-Kappa-B-like protein family.

Suppresses the host immune response through NF-kappa-B inactivation. Possesses ankyrin repeat domains required for NF-kappa-B binding but lacks the regulatory regions required for dissociation from NF-kappa-B and degradation. Therefore, prevents host NF-kappa-B release and subsequent activation. In Microplitis demolitor bracovirus (isolate Webb) (MdBV), this protein is I-Kappa-B like protein F1 (F2).